Consider the following 215-residue polypeptide: Chaperone protein TorD (215 aa).

This sequence belongs to the TorD/DmsD family. TorD subfamily.

The protein localises to the cytoplasm. Involved in the biogenesis of TorA. Acts on TorA before the insertion of the molybdenum cofactor and, as a result, probably favors a conformation of the apoenzyme that is competent for acquiring the cofactor. The protein is Chaperone protein TorD of Vibrio vulnificus (strain CMCP6).